A 258-amino-acid chain; its full sequence is MRSSHKSFDFENSLKRIDSILNDSTSYEESDDIPDIDDLTFNNGKYVNCAAIFIDLRGSTDLIKTLGKLSKSLARLYRAYISEMVAIVNSFKTCKEINIVGDCVSAMFAGDIEGAESPVIEALQASSMANAMMNVLNVKYKKKWKDFVELKAGIGVAYGRALVIKAGFSGSGIKDLVYMGDVVNKASKMCGLAYKEYTSHAICVTKEVYENAGKYIANEEKKLTYQDFLTEKNHNTFGSVYVGNFHRVYINNWAEENK.

The region spanning 50-190 (AAIFIDLRGS…DVVNKASKMC (141 aa)) is the Guanylate cyclase domain. Phe-53 serves as a coordination point for a ribonucleoside 5'-triphosphate. Mn(2+)-binding residues include Asp-55 and Asp-102.

This sequence belongs to the adenylyl cyclase class-4/guanylyl cyclase family. Pyrimidine cyclase subfamily. Homodimer. Requires Mn(2+) as cofactor.

It localises to the cytoplasm. It carries out the reaction UTP = 3',5'-cyclic UMP + diphosphate. Its function is as follows. Pycsar (pyrimidine cyclase system for antiphage resistance) provides immunity against bacteriophage. The pyrimidine cyclase (PycC) synthesizes cyclic nucleotides in response to infection; these serve as specific second messenger signals. The signals activate the adjacent effector, leading to bacterial cell death and abortive phage infection. A clade C Pycsar system. In terms of biological role, the pyrimidine cyclase gene of a two-gene Pycsar system, weakly generates cyclic UMP (cUMP) from UTP, has little to no activity on ATP, CTP or GTP. Expression of this and adjacent effector GmPycTM (AC P0DV43) probably confers resistance to bacteriophage. The genes are probably only expressed in response to bacteriophage infection. This chain is Uridylate cyclase, found in Gulbenkiania mobilis.